A 275-amino-acid polypeptide reads, in one-letter code: Protein FAM210A (275 aa).

The tract at residues 51–100 (KWLHSQPKQQDTATKTPVHDLPSGIQHQSEETSPSARSSISTDPSSIAEE) is disordered. Composition is skewed to polar residues over residues 56 to 65 (QPKQQDTATK) and 75 to 95 (IQHQSEETSPSARSSISTDPS). The DUF1279 domain maps to 105-217 (DQSIGLLKRF…GYLSTPPLVK (113 aa)). A helical membrane pass occupies residues 124–144 (VLIPVHLVTSSIWFGSFYYAA). The stretch at 221–275 (QDRMEETKELFTEKMEETRDIISGKMEETKDRISEKLQETKDRVAFRKKKNEDME) forms a coiled coil.

Belongs to the FAM210 family.

It is found in the membrane. The protein resides in the mitochondrion. It localises to the cytoplasm. Its function is as follows. May play a role in the structure and strength of both muscle and bone. This is Protein FAM210A (fam210a) from Xenopus laevis (African clawed frog).